A 160-amino-acid polypeptide reads, in one-letter code: Ribosomal RNA large subunit methyltransferase H (160 aa).

S-adenosyl-L-methionine contacts are provided by residues Leu76, Gly108, and 127-132 (LGKMTW).

This sequence belongs to the RNA methyltransferase RlmH family. Homodimer.

It localises to the cytoplasm. It carries out the reaction pseudouridine(1915) in 23S rRNA + S-adenosyl-L-methionine = N(3)-methylpseudouridine(1915) in 23S rRNA + S-adenosyl-L-homocysteine + H(+). Specifically methylates the pseudouridine at position 1915 (m3Psi1915) in 23S rRNA. The sequence is that of Ribosomal RNA large subunit methyltransferase H from Rhizobium johnstonii (strain DSM 114642 / LMG 32736 / 3841) (Rhizobium leguminosarum bv. viciae).